The sequence spans 200 residues: Putative pseudouridine methyltransferase (200 aa).

2 residues coordinate S-adenosyl-L-methionine: Met-133 and Cys-187.

The protein belongs to the methyltransferase superfamily. TrmY family.

The protein localises to the cytoplasm. The sequence is that of Putative pseudouridine methyltransferase from Alcanivorax borkumensis (strain ATCC 700651 / DSM 11573 / NCIMB 13689 / SK2).